Here is a 673-residue protein sequence, read N- to C-terminus: Potassium-transporting ATPase ATP-binding subunit (673 aa).

The next 4 helical transmembrane spans lie at Ile34–Leu54, Val65–Leu85, Ile216–Met236, and Ile253–Ile273. Asp304 (4-aspartylphosphate intermediate) is an active-site residue. Residues Asp341, Glu345, Phe370–Ser377, and Lys388 each bind ATP. The Mg(2+) site is built by Asp511 and Asp515. A run of 3 helical transmembrane segments spans residues Phe581 to Met601, Ala609 to Met629, and Val649 to Ile669.

Belongs to the cation transport ATPase (P-type) (TC 3.A.3) family. Type IA subfamily. The system is composed of three essential subunits: KdpA, KdpB and KdpC.

It is found in the cell membrane. The enzyme catalyses K(+)(out) + ATP + H2O = K(+)(in) + ADP + phosphate + H(+). In terms of biological role, part of the high-affinity ATP-driven potassium transport (or Kdp) system, which catalyzes the hydrolysis of ATP coupled with the electrogenic transport of potassium into the cytoplasm. This subunit is responsible for energy coupling to the transport system and for the release of the potassium ions to the cytoplasm. This Staphylococcus epidermidis (strain ATCC 35984 / DSM 28319 / BCRC 17069 / CCUG 31568 / BM 3577 / RP62A) protein is Potassium-transporting ATPase ATP-binding subunit.